The chain runs to 497 residues: Putative endothelial lipase (497 aa).

An N-terminal signal peptide occupies residues 1 to 23; the sequence is MRACPFLLLLLLPLLLSLGRIAA. Cys-73 and Cys-86 are oxidised to a cystine. N-linked (GlcNAc...) asparagine glycans are attached at residues Asn-89 and Asn-145. The Nucleophile role is filled by Ser-178. Catalysis depends on Asp-202, which acts as the Charge relay system. An intrachain disulfide couples Cys-262 to Cys-282. The active-site Charge relay system is the His-284. 2 disulfide bridges follow: Cys-307–Cys-326 and Cys-318–Cys-321. Residue 335 to 347 coordinates heparin; sequence KMRNKRNSKMYLK. The region spanning 357–492 is the PLAT domain; sequence FHYQLKIHVF…CLKMVKVEKH (136 aa). Residue Asn-403 is glycosylated (N-linked (GlcNAc...) asparagine).

This sequence belongs to the AB hydrolase superfamily. Lipase family. In terms of assembly, head to tail homodimer. In terms of tissue distribution, expressed by the venom gland.

The protein resides in the secreted. The enzyme catalyses a triacylglycerol + H2O = a diacylglycerol + a fatty acid + H(+). Inhibited by serum. Functionally, has phospholipase and triglyceride lipase activities. This is Putative endothelial lipase from Crotalus adamanteus (Eastern diamondback rattlesnake).